Consider the following 356-residue polypeptide: 3'-5' exonuclease (356 aa).

The segment at 1–120 (MDKYLIKMPT…TPSPEKEKPE (120 aa)) is disordered. Basic and acidic residues-rich tracts occupy residues 29–56 (TIDKQKEKNTPTEKQKQEDDYVEKENTP) and 71–85 (KNQDTPTEVKDIKNE). Residues 99 to 113 (LTRSTRSMAEEGTPS) show a composition bias toward low complexity. Serine 105 and serine 113 each carry phosphoserine. The 3'-5' exonuclease domain occupies 155 to 316 (TTLDVVPMAF…GQVIYRDLEQ (162 aa)). The Mg(2+) site is built by aspartate 165, glutamate 167, and aspartate 303.

This sequence belongs to the WRNexo family.

The protein resides in the nucleus. Functionally, has exonuclease activity on both single-stranded and duplex templates bearing overhangs, but not blunt ended duplex DNA, and cleaves in a 3'-5' direction. Essential for the formation of DNA replication focal centers. Has an important role in maintaining genome stability. In Drosophila willistoni (Fruit fly), this protein is 3'-5' exonuclease.